Here is a 308-residue protein sequence, read N- to C-terminus: Probable manganese-dependent inorganic pyrophosphatase (308 aa).

Residues H9, D13, D15, D75, H97, and D149 each coordinate Mn(2+).

Belongs to the PPase class C family. Mn(2+) is required as a cofactor.

The protein localises to the cytoplasm. It carries out the reaction diphosphate + H2O = 2 phosphate + H(+). In Bacillus pumilus (strain SAFR-032), this protein is Probable manganese-dependent inorganic pyrophosphatase.